The chain runs to 46 residues: Protein krueppel (46 aa).

C2H2-type zinc fingers lie at residues methionine 1–histidine 4, tyrosine 10–histidine 32, and tyrosine 38–arginine 46.

Belongs to the krueppel C2H2-type zinc-finger protein family.

It localises to the nucleus. In terms of biological role, krueppel is a gap class segmentation protein. This is Protein krueppel (Kr) from Pholcus phalangioides (Longbodied cellar spider).